The primary structure comprises 250 residues: 2,3-bisphosphoglycerate-dependent phosphoglycerate mutase (250 aa).

Substrate is bound by residues 10–17 (RHGESQWN), 23–24 (TG), arginine 62, 89–92 (ERHY), lysine 100, 116–117 (RR), and 185–186 (GN). Histidine 11 acts as the Tele-phosphohistidine intermediate in catalysis. The active-site Proton donor/acceptor is the glutamate 89.

It belongs to the phosphoglycerate mutase family. BPG-dependent PGAM subfamily. Homodimer.

The enzyme catalyses (2R)-2-phosphoglycerate = (2R)-3-phosphoglycerate. It participates in carbohydrate degradation; glycolysis; pyruvate from D-glyceraldehyde 3-phosphate: step 3/5. Catalyzes the interconversion of 2-phosphoglycerate and 3-phosphoglycerate. The protein is 2,3-bisphosphoglycerate-dependent phosphoglycerate mutase of Citrobacter koseri (strain ATCC BAA-895 / CDC 4225-83 / SGSC4696).